Here is a 639-residue protein sequence, read N- to C-terminus: tRNA uridine 5-carboxymethylaminomethyl modification enzyme MnmG (639 aa).

FAD is bound at residue 15–20 (GAGHAG). An NAD(+)-binding site is contributed by 276–290 (GPRYCPSIEDKIVRF).

Belongs to the MnmG family. As to quaternary structure, homodimer. Heterotetramer of two MnmE and two MnmG subunits. The cofactor is FAD.

The protein resides in the cytoplasm. Its function is as follows. NAD-binding protein involved in the addition of a carboxymethylaminomethyl (cmnm) group at the wobble position (U34) of certain tRNAs, forming tRNA-cmnm(5)s(2)U34. This is tRNA uridine 5-carboxymethylaminomethyl modification enzyme MnmG from Streptococcus gordonii (strain Challis / ATCC 35105 / BCRC 15272 / CH1 / DL1 / V288).